An 842-amino-acid chain; its full sequence is Protein translocase subunit SecA (842 aa).

ATP is bound by residues Q85, 103-107 (GEGKT), and D493. Residues C825, C827, C836, and H837 each coordinate Zn(2+).

The protein belongs to the SecA family. As to quaternary structure, monomer and homodimer. Part of the essential Sec protein translocation apparatus which comprises SecA, SecYEG and auxiliary proteins SecDF. Other proteins may also be involved. Requires Zn(2+) as cofactor.

It localises to the cell membrane. The protein resides in the cytoplasm. The catalysed reaction is ATP + H2O + cellular proteinSide 1 = ADP + phosphate + cellular proteinSide 2.. Its function is as follows. Part of the Sec protein translocase complex. Interacts with the SecYEG preprotein conducting channel. Has a central role in coupling the hydrolysis of ATP to the transfer of proteins into and across the cell membrane, serving as an ATP-driven molecular motor driving the stepwise translocation of polypeptide chains across the membrane. The polypeptide is Protein translocase subunit SecA (Streptococcus equi subsp. zooepidemicus (strain MGCS10565)).